Here is a 356-residue protein sequence, read N- to C-terminus: tRNA N6-adenosine threonylcarbamoyltransferase (356 aa).

Residues H115 and H119 each coordinate Fe cation. Substrate-binding positions include 137–141 (LVSGG), D170, G183, and N280. A Fe cation-binding site is contributed by D308.

The protein belongs to the KAE1 / TsaD family. It depends on Fe(2+) as a cofactor.

Its subcellular location is the cytoplasm. The catalysed reaction is L-threonylcarbamoyladenylate + adenosine(37) in tRNA = N(6)-L-threonylcarbamoyladenosine(37) in tRNA + AMP + H(+). In terms of biological role, required for the formation of a threonylcarbamoyl group on adenosine at position 37 (t(6)A37) in tRNAs that read codons beginning with adenine. Is involved in the transfer of the threonylcarbamoyl moiety of threonylcarbamoyl-AMP (TC-AMP) to the N6 group of A37, together with TsaE and TsaB. TsaD likely plays a direct catalytic role in this reaction. In Paracoccus denitrificans (strain Pd 1222), this protein is tRNA N6-adenosine threonylcarbamoyltransferase.